Here is a 539-residue protein sequence, read N- to C-terminus: MRQLAAGSLLSLLKVLLLPLAPAPAQDANSASTPGSPLSPTEYERFFALLTPTWKAETTCRLRATHGCRNPTLVQLDQYENHGLVPDGAVCSDLPYASWFESFCQFTQYRCSNHVYYAKRVRCSQPVSILSPNSLKEVDTSSEVPITTMTSPVSSHITATGRQVFQPWPERLNNNVEELLQSSLSLGGQEQGQEHKQEHKQEQGQEHKQDEGQEQEEQEEEQEEEGKQEEGQGTEESLEAMSGLQADSEPKFQSEFVSSNPFSFTPRVREVESTPMMMENIQELIRSAQEMDEMGDVYEEENIWRAQSPGSLLQLPHVDALLVLCYSIVENTCVITPTAKAWQYLEDETLGFGKSVCDSLGRRHLAACSLCDFCSLKLEQCHSETNLQRQQCDNSHKTPFISPLLASQSMSIGTQIGTLKSGRFYGLDLYGGLRMDFWCARLATKGCEDNRVASWLQTEFLSFQDGDFPTKICDTEYVQYPNYCAFKSQQCMMRNRDRKVSRMRCLQNETYTVLTQAKSEDLVLRWSQEFSTLTLGQAG.

A signal peptide spans 1 to 25 (MRQLAAGSLLSLLKVLLLPLAPAPA). The segment at 26–106 (QDANSASTPG…ASWFESFCQF (81 aa)) is pro-ACR binding. The propeptide at 26 to 269 (QDANSASTPG…NPFSFTPRVR (244 aa)) is removed in active form. The segment at 186 to 259 (LGGQEQGQEH…PKFQSEFVSS (74 aa)) is disordered. Over residues 192 to 211 (GQEHKQEHKQEQGQEHKQDE) the composition is skewed to basic and acidic residues. Residues 212-238 (GQEQEEQEEEQEEEGKQEEGQGTEESL) show a composition bias toward acidic residues. Residues 315–423 (LPHVDALLVL…TQIGTLKSGR (109 aa)) form a pro-ACR binding region.

Binds specifically to the 55- and 53-kDa proacrosins and the 49-kDa acrosin intermediate, but is not capable of binding 43-kDa acrosin intermediate and 32-kDa mature acrosin. The N-terminus is blocked. Post-translationally, synthesized as a 60-kDa precursor, the 35-kDa mature form is post-translationally produced by the removal of the N-terminal half of the precursor during sperm maturation in the testis and/or epididymis. In terms of processing, phosphorylated on Tyr residues in capacitated sperm. In terms of tissue distribution, specifically expressed in testis.

The protein localises to the secreted. The protein resides in the cytoplasmic vesicle. It localises to the secretory vesicle. Its subcellular location is the acrosome. Acrosomal protein that maintains proacrosin (pro-ACR) as an enzymatically inactive zymogen in the acrosome. Involved also in the acrosome formation. The polypeptide is Acrosin-binding protein (Sus scrofa (Pig)).